The following is an 862-amino-acid chain: Alpha,alpha-trehalose-phosphate synthase [UDP-forming] 5 (862 aa).

Position 5 is a phosphoserine (Ser5). Residue Thr32 is modified to Phosphothreonine. Residues 60–546 are glycosyltransferase; that stretch reads DRIIIVGNQL…ARSFIQDLER (487 aa).

The protein in the N-terminal section; belongs to the glycosyltransferase 20 family. In the C-terminal section; belongs to the trehalose phosphatase family. Binds to the phosphopeptide-binding site of GRF/14-3-3 and to MBF1c. Post-translationally, both Ser-5 and Thr-32 must be phosphorylated for binding to GRF/14-3-3. In terms of tissue distribution, low expression in leaves, stems, flower buds, flowers and siliques.

It catalyses the reaction D-glucose 6-phosphate + UDP-alpha-D-glucose = alpha,alpha-trehalose 6-phosphate + UDP + H(+). The sequence is that of Alpha,alpha-trehalose-phosphate synthase [UDP-forming] 5 (TPS5) from Arabidopsis thaliana (Mouse-ear cress).